The following is a 445-amino-acid chain: Allantoinase (445 aa).

Residues histidine 63, histidine 65, lysine 150, histidine 186, histidine 238, and aspartate 311 each coordinate Zn(2+). Residue lysine 150 is modified to N6-carboxylysine.

Belongs to the metallo-dependent hydrolases superfamily. Allantoinase family. Homotetramer. Requires Zn(2+) as cofactor. Carboxylation allows a single lysine to coordinate two zinc ions.

It carries out the reaction (S)-allantoin + H2O = allantoate + H(+). Its pathway is nitrogen metabolism; (S)-allantoin degradation; allantoate from (S)-allantoin: step 1/1. Catalyzes the conversion of allantoin (5-ureidohydantoin) to allantoic acid by hydrolytic cleavage of the five-member hydantoin ring. This is Allantoinase from Streptomyces avermitilis (strain ATCC 31267 / DSM 46492 / JCM 5070 / NBRC 14893 / NCIMB 12804 / NRRL 8165 / MA-4680).